The following is a 660-amino-acid chain: Pro-secreted protein ORF2 (660 aa).

The first 23 residues, 1-23, serve as a signal peptide directing secretion; sequence MRPRAVLLLLFVLLPMLPAPPAG. 2 disordered regions span residues 19-43 and 64-125; these read APPA…GFWG and ADVV…VPDV. Residues 28 to 33 carry the Nuclear localization signal motif; the sequence is RRRGRR. Low complexity predominate over residues 93 to 124; sequence RPSAAPRRRSAPAGAAPLTAVSPAPDTAPVPD. N-linked (GlcNAc...) asparagine; by host glycosylation is found at N137 and N310. Residues 368–394 are particle formation; sequence IALTLFNLADTLLGGLPTELISSAGGQ. N-linked (GlcNAc...) asparagine; by host glycosylation occurs at N562. Positions 585-610 are oligomerization; it reads TTSLGAGPTSISAVGVLAPHSALAVL.

Belongs to the hepevirus capsid protein family. In terms of assembly, homodimer. Self-assembles to form the capsid. The capsid is dominated by dimers that define the 30 morphological units. Interacts with phosphorylated protein ORF3. Interacts with host TMEM134. Interacts with host ASGR1 and ASGR2; these interactions facilitate infection of host hepatocytes. Post-translationally, cleaved by host protease in the N-terminus. N-glycosylated. In terms of processing, not N-glycosylated. The C-terminus of the capsid protein ORF2 is truncated in non-enveloped virions shedded in feces, probably due to host proteases.

Its subcellular location is the secreted. It is found in the virion. The protein localises to the host cytoplasm. It localises to the host endoplasmic reticulum. The protein resides in the host Golgi apparatus. Its subcellular location is the host cell surface. It is found in the host nucleus. In terms of biological role, plays a role in the inhibition of host antibody-mediated neutralization without blocking viral cell entry. Its function is as follows. Forms an icosahedral capsid with a T=1 symmetry and a 34 nm diameter. The capsid is composed of 60 copies linked to each other. Binds to the 5' end of the genomic RNA to mediate genome encapsidation. Binds to heparin surface proteoglycans (HSPGs) to mediate viral entry. Additionally, the interactions with host ASGR1 and ASGR2 facilitate viral infection of hepatocytes. Inhibits IFN production by blocking host TBK1-induced IRF3 phosphorylation. The nuclear form probably modulates host gene expression. The chain is Pro-secreted protein ORF2 from Hepatitis E virus genotype 3 (isolate Human/United States/US2) (HEV-3).